The primary structure comprises 88 residues: Small ribosomal subunit protein bS18A (88 aa).

This sequence belongs to the bacterial ribosomal protein bS18 family. As to quaternary structure, part of the 30S ribosomal subunit. Forms a tight heterodimer with protein bS6.

Its function is as follows. Binds as a heterodimer with protein bS6 to the central domain of the 16S rRNA, where it helps stabilize the platform of the 30S subunit. The sequence is that of Small ribosomal subunit protein bS18A from Roseiflexus sp. (strain RS-1).